We begin with the raw amino-acid sequence, 59 residues long: UPF0434 protein Sbal_1685 (59 aa).

The protein belongs to the UPF0434 family.

This is UPF0434 protein Sbal_1685 from Shewanella baltica (strain OS155 / ATCC BAA-1091).